A 511-amino-acid chain; its full sequence is Maturase K (511 aa).

The protein belongs to the intron maturase 2 family. MatK subfamily.

It localises to the plastid. The protein localises to the chloroplast. Its function is as follows. Usually encoded in the trnK tRNA gene intron. Probably assists in splicing its own and other chloroplast group II introns. This Chloranthus spicatus (Chulantree) protein is Maturase K.